The sequence spans 92 residues: Anti-restriction endonuclease (92 aa).

Pays a role in the inhibition of the host restriction-modification system. Strongly inhibits the host mcrA endonuclease that cleaves 5-methyl and 5-hydroxymethylcytosines at the specific DNA sequence C(me)CGG. The protein is Anti-restriction endonuclease (arn) of Enterobacteria phage T4 (Bacteriophage T4).